The following is a 304-amino-acid chain: tRNA-uridine aminocarboxypropyltransferase 1 (304 aa).

N-acetylserine is present on Ser-2. A DXTW motif is present at residues 206 to 209 (DSTW).

The protein belongs to the TDD superfamily. DTWD1 family.

The protein localises to the nucleus. The catalysed reaction is a uridine in tRNA + S-adenosyl-L-methionine = a 3-[(3S)-3-amino-3-carboxypropyl]uridine in tRNA + S-methyl-5'-thioadenosine + H(+). In terms of biological role, catalyzes the formation of 3-(3-amino-3-carboxypropyl)uridine (acp3U) at position 20 in the D-loop of several cytoplasmic tRNAs (acp3U(20)). This Homo sapiens (Human) protein is tRNA-uridine aminocarboxypropyltransferase 1.